The sequence spans 674 residues: Probable copper-transporting P-type ATPase B (674 aa).

Residues 1–22 are disordered; the sequence is MNHSNQMHHDNHESHNHHSGHA. Positions 7-16 are enriched in basic and acidic residues; that stretch reads MHHDNHESHN. 6 helical membrane passes run 32–52, 57–77, 95–115, 127–147, 284–304, and 315–335; these read FFVS…MGVN, FTFP…FFYG, GMMT…LYAF, TMDF…GHWI, GYLF…WMLI, and LVTV…PLVT. Asp-367 functions as the 4-aspartylphosphate intermediate in the catalytic mechanism. Asp-565 and Asp-569 together coordinate Mg(2+). 2 helical membrane-spanning segments follow: residues 623–645 and 649–671; these read LWWG…AFIG and SPAI…AFTL.

Belongs to the cation transport ATPase (P-type) (TC 3.A.3) family. Type IB subfamily.

Its subcellular location is the cell membrane. The catalysed reaction is Cu(+)(in) + ATP + H2O = Cu(+)(out) + ADP + phosphate + H(+). In terms of biological role, involved in copper transport. The protein is Probable copper-transporting P-type ATPase B (copB) of Staphylococcus epidermidis (strain ATCC 35984 / DSM 28319 / BCRC 17069 / CCUG 31568 / BM 3577 / RP62A).